The sequence spans 649 residues: Outer dense fiber protein 2 (649 aa).

A disordered region spans residues 1–65 (MKNRSPSPPL…TKVPWIPPGK (65 aa)). Coiled-coil stretches lie at residues 137–219 (QKRE…AETD), 247–426 (DINL…LEML), and 464–649 (EVAV…NCAL). A disordered region spans residues 339-358 (SEVSKSIESTKAHLQGQLRT).

Belongs to the ODF2 family. As to quaternary structure, self-associates. Associates with microtubules and forms a fibrillar structure partially linked to the microtubule network.

It localises to the cytoplasm. The protein localises to the cytoskeleton. The protein resides in the microtubule organizing center. It is found in the centrosome. Its subcellular location is the cell projection. It localises to the cilium. The protein localises to the centriole. The protein resides in the spindle pole. It is found in the flagellum. Its function is as follows. Seems to be a major form of sperm tail outer dense fibers. This chain is Outer dense fiber protein 2 (odf2), found in Xenopus laevis (African clawed frog).